The primary structure comprises 46 residues: Amine oxidase [flavin-containing] A (46 aa).

Belongs to the flavin monoamine oxidase family. Monomer, homo- or heterodimer (containing two subunits of similar size). Each subunit contains a covalently bound flavin. Enzymatically active as monomer. Requires FAD as cofactor.

It is found in the mitochondrion outer membrane. The enzyme catalyses a secondary aliphatic amine + O2 + H2O = a primary amine + an aldehyde + H2O2. It catalyses the reaction a primary methyl amine + O2 + H2O = an aldehyde + H2O2 + NH4(+). It carries out the reaction (R)-adrenaline + O2 + H2O = (R)-3,4-dihydroxymandelaldehyde + methylamine + H2O2. The catalysed reaction is dopamine + O2 + H2O = 3,4-dihydroxyphenylacetaldehyde + H2O2 + NH4(+). The enzyme catalyses tyramine + O2 + H2O = (4-hydroxyphenyl)acetaldehyde + H2O2 + NH4(+). It catalyses the reaction (R)-noradrenaline + O2 + H2O = (R)-3,4-dihydroxymandelaldehyde + H2O2 + NH4(+). It carries out the reaction serotonin + O2 + H2O = (5-hydroxyindol-3-yl)acetaldehyde + H2O2 + NH4(+). The catalysed reaction is kynuramine + O2 + H2O = 3-(2-aminophenyl)-3-oxopropanal + H2O2 + NH4(+). The enzyme catalyses tryptamine + O2 + H2O = indole-3-acetaldehyde + H2O2 + NH4(+). It catalyses the reaction 2-phenylethylamine + O2 + H2O = 2-phenylacetaldehyde + H2O2 + NH4(+). Functionally, catalyzes the oxidative deamination of primary and some secondary amine such as neurotransmitters, with concomitant reduction of oxygen to hydrogen peroxide and has important functions in the metabolism of neuroactive and vasoactive amines in the central nervous system and peripheral tissues. Preferentially oxidizes serotonin. Also catalyzes the oxidative deamination of kynuramine to 3-(2-aminophenyl)-3-oxopropanal that can spontaneously condense to 4-hydroxyquinoline. In Ovis aries (Sheep), this protein is Amine oxidase [flavin-containing] A.